The chain runs to 133 residues: Small ribosomal subunit protein bS6 (133 aa).

This sequence belongs to the bacterial ribosomal protein bS6 family.

Binds together with bS18 to 16S ribosomal RNA. This chain is Small ribosomal subunit protein bS6, found in Chlorobium phaeovibrioides (strain DSM 265 / 1930) (Prosthecochloris vibrioformis (strain DSM 265)).